We begin with the raw amino-acid sequence, 198 residues long: Dynein light chain Tctex-type protein 2 (198 aa).

The segment at 1–34 is disordered; it reads MEKRGRGVKSSPIQTPNQTPQQAPVTPRKERRPS. Over residues 11-24 the composition is skewed to polar residues; the sequence is SPIQTPNQTPQQAP.

It belongs to the dynein light chain Tctex-type family. Interacts with CCDC159. Interacts with CSNK2B. As to expression, expressed predominantly in testis. Also expressed in brain, lung and trachea.

Its subcellular location is the cytoplasm. The protein localises to the cytoskeleton. It localises to the cytoplasmic granule. The protein resides in the membrane. Functionally, may be an accessory component of axonemal dynein and cytoplasmic dynein 1. Candidate for involvement in male sterility. In Homo sapiens (Human), this protein is Dynein light chain Tctex-type protein 2.